A 188-amino-acid chain; its full sequence is Large ribosomal subunit protein eL18 (188 aa).

The tract at residues 143–188 (RSAREAEKHFGPAPGVPHSHTKPHVRSKGRKFERARGRRASRAYKN) is disordered. 2 stretches are compositionally biased toward basic residues: residues 161–171 (SHTKPHVRSKG) and 178–188 (RGRRASRAYKN).

It belongs to the eukaryotic ribosomal protein eL18 family.

It localises to the cytoplasm. The protein is Large ribosomal subunit protein eL18 (rpl-18) of Caenorhabditis briggsae.